Consider the following 130-residue polypeptide: Small ribosomal subunit protein uS8 (130 aa).

Belongs to the universal ribosomal protein uS8 family. In terms of assembly, part of the 30S ribosomal subunit. Contacts proteins S5 and S12.

Functionally, one of the primary rRNA binding proteins, it binds directly to 16S rRNA central domain where it helps coordinate assembly of the platform of the 30S subunit. This chain is Small ribosomal subunit protein uS8, found in Vibrio parahaemolyticus serotype O3:K6 (strain RIMD 2210633).